The following is a 221-amino-acid chain: Adenylate kinase (221 aa).

Position 10–15 (10–15) interacts with ATP; it reads GAGKGT. The interval 30–59 is NMP; that stretch reads STGDMLRAAVKAGTPLGVEAKKVMDAGGLV. AMP-binding positions include Thr-31, Arg-36, 57–59, 85–88, and Gln-92; these read GLV and GFPR. Residues 122–159 form an LID region; it reads GRRVHVASGRTYHVKYNPPKTEGVDDETGEALIQRDDD. Residues Arg-123 and 132 to 133 contribute to the ATP site; that span reads TY. Arg-156 and Arg-167 together coordinate AMP. Gly-207 serves as a coordination point for ATP.

Belongs to the adenylate kinase family. In terms of assembly, monomer.

It localises to the cytoplasm. It carries out the reaction AMP + ATP = 2 ADP. The protein operates within purine metabolism; AMP biosynthesis via salvage pathway; AMP from ADP: step 1/1. In terms of biological role, catalyzes the reversible transfer of the terminal phosphate group between ATP and AMP. Plays an important role in cellular energy homeostasis and in adenine nucleotide metabolism. The polypeptide is Adenylate kinase (Cupriavidus necator (strain ATCC 17699 / DSM 428 / KCTC 22496 / NCIMB 10442 / H16 / Stanier 337) (Ralstonia eutropha)).